A 363-amino-acid chain; its full sequence is Phosphatidylinositol transfer protein sfh-5 (363 aa).

Residues 1 to 84 (MSTQPSDSAE…SPADIKDSVS (84 aa)) form a disordered region. Over residues 36–46 (DAAKHAEEEPK) the composition is skewed to basic and acidic residues. The span at 64–76 (KPAAAPAQEADSP) shows a compositional bias: low complexity. The CRAL-TRIO domain maps to 180–354 (AGDEPAVDEP…EYGGKGADLK (175 aa)). Tyrosine 200, arginine 220, histidine 253, tyrosine 255, and lysine 289 together coordinate heme.

This sequence belongs to the SFH5 family. Heme b serves as cofactor.

It localises to the cytoplasm. The protein resides in the endoplasmic reticulum membrane. The protein localises to the microsome membrane. It catalyses the reaction a 1,2-diacyl-sn-glycero-3-phospho-(1D-myo-inositol)(in) = a 1,2-diacyl-sn-glycero-3-phospho-(1D-myo-inositol)(out). In terms of biological role, non-classical phosphatidylinositol (PtdIns) transfer protein (PITP), which exhibits PtdIns-binding/transfer activity in the absence of detectable PtdCho-binding/transfer activity. Regulates PtdIns(4,5)P2 homeostasis at the plasma membrane. Heme-binding protein that may play a role in organic oxidant-induced stress responses. In Neurospora crassa (strain ATCC 24698 / 74-OR23-1A / CBS 708.71 / DSM 1257 / FGSC 987), this protein is Phosphatidylinositol transfer protein sfh-5 (sfh-5).